A 584-amino-acid chain; its full sequence is Galectin-3-binding protein (584 aa).

The N-terminal stretch at M1–G18 is a signal peptide. The region spanning M24–T124 is the SRCR domain. Cystine bridges form between C49-C113, C62-C123, and C93-C103. A glycan (N-linked (GlcNAc...) asparagine) is linked at N69. Residues N125 and N192 are each glycosylated (N-linked (GlcNAc...) asparagine). Residues C153–L221 form the BTB domain. Positions P260 to Q359 constitute a BACK domain. N361, N397, N550, and N579 each carry an N-linked (GlcNAc...) asparagine glycan.

Homodimers and homomultimers. The multimers form ring-like structures with a diameter of 30-40 nm. Binds LGALS1 and LGALS3. Binds ITGB1, COL4A1, COL5A1, COL6A1, FN1 and NID. Interacts with the gamma-tubulin ring complex (gamma-TuRC), composed of gamma-tubulin, TUBGCP2, TUBGCP3, TUBGCP4, TUBGCP5 and TUBGCP6. The unglycosylated form interacts with PDE4DIP; this interaction, which is PDE4DIP isoform-specific, may connect a pericentrosomal complex, made of AKAP9, CDK5RAP2, EB1/MAPRE1 and PDE4DIP, to the gamma-tubulin ring complex (gamma-TuRC) to promote microtubule assembly and acetylation.

The protein localises to the secreted. It is found in the extracellular space. Its subcellular location is the extracellular matrix. Its function is as follows. Promotes integrin-mediated cell adhesion. May stimulate host defense against viruses and tumor cells. The chain is Galectin-3-binding protein (LGALS3BP) from Pongo abelii (Sumatran orangutan).